A 391-amino-acid chain; its full sequence is Yellow-related salivary protein ASP4 (391 aa).

Positions 1–18 (MKIFLCIIAVVSLQGVVA) are cleaved as a signal peptide. N-linked (GlcNAc...) asparagine glycosylation occurs at Asn29.

It belongs to the major royal jelly protein family. Female salivary gland (at protein level).

It is found in the secreted. Functionally, probably modulates blood feeding of sand flies on vertebrate species by binding and sequestering different mediators involved in the host response. Binds biogenic amines. Binds serotonin and dopamine with high affinity. Binds adrenaline, octopamine and adrenaline with medium affinity. Binds histamine with low affinity. The chain is Yellow-related salivary protein ASP4 from Phlebotomus orientalis (Phlebotomine sand fly).